The sequence spans 790 residues: Phenylalanine--tRNA ligase beta subunit (790 aa).

The tRNA-binding domain maps to 39–147; that stretch reads AKPFSGIVVG…ADAPVGVDVR (109 aa). Positions 400–476 constitute a B5 domain; sequence PAKALVNLRH…RLYGYNKLPV (77 aa). 4 residues coordinate Mg(2+): D454, D460, E463, and E464. The FDX-ACB domain maps to 696-789; sequence SRFPEIRRDL…LGNRFGASLR (94 aa).

Belongs to the phenylalanyl-tRNA synthetase beta subunit family. Type 1 subfamily. As to quaternary structure, tetramer of two alpha and two beta subunits. It depends on Mg(2+) as a cofactor.

It localises to the cytoplasm. It carries out the reaction tRNA(Phe) + L-phenylalanine + ATP = L-phenylalanyl-tRNA(Phe) + AMP + diphosphate + H(+). The chain is Phenylalanine--tRNA ligase beta subunit from Hahella chejuensis (strain KCTC 2396).